A 651-amino-acid polypeptide reads, in one-letter code: Aspartate--tRNA ligase, mitochondrial (651 aa).

A mitochondrion-targeting transit peptide spans 1-44 (MFCWLSRLCGELSTPTRRTTQLIWSSAARSMVLSSQRIPELSSF). T216 bears the Phosphothreonine mark. A Phosphoserine modification is found at S239. Positions 241 to 244 (QQFK) are aspartate. Residue R263 participates in L-aspartate binding. 263–265 (RDE) contacts ATP. K379 carries the N6-acetyllysine modification. Residue E532 participates in ATP binding. R539 contacts L-aspartate. 581-584 (GLDR) is an ATP binding site.

Belongs to the class-II aminoacyl-tRNA synthetase family. Type 1 subfamily. In terms of assembly, homodimer.

It localises to the mitochondrion matrix. It is found in the mitochondrion membrane. It catalyses the reaction tRNA(Asp) + L-aspartate + ATP = L-aspartyl-tRNA(Asp) + AMP + diphosphate. Its function is as follows. Catalyzes the attachment of aspartate to tRNA(Asp) in a two-step reaction: aspartate is first activated by ATP to form Asp-AMP and then transferred to the acceptor end of tRNA(Asp). The sequence is that of Aspartate--tRNA ligase, mitochondrial (DARS2) from Bos taurus (Bovine).